The following is a 199-amino-acid chain: Chorismate pyruvate-lyase (199 aa).

Belongs to the chorismate pyruvate-lyase type 2 family.

The catalysed reaction is chorismate = 4-hydroxybenzoate + pyruvate. Functionally, removes the pyruvyl group from chorismate to provide 4-hydroxybenzoate (4HB). Involved in the synthesis of glycosylated p-hydroxybenzoic acid methyl esters (p-HBADs) and phenolic glycolipids (PGL) that play important roles in the pathogenesis of mycobacterial infections. The chain is Chorismate pyruvate-lyase from Mycobacterium bovis (strain ATCC BAA-935 / AF2122/97).